The following is a 202-amino-acid chain: Regulator of G-protein signaling 16 (202 aa).

2 S-palmitoyl cysteine lipidation sites follow: Cys2 and Cys12. Residues 65–181 (SFDLLLSSKN…LKSPAYRDLA (117 aa)) enclose the RGS domain. Tyr168 carries the post-translational modification Phosphotyrosine; by EGFR. The residue at position 177 (Tyr177) is a Phosphotyrosine. The interval 183-202 (QATAASASPSSSSPAEPLHT) is disordered.

In terms of assembly, interacts with GNAI1 and GNAQ. Interacts with GNAI3, GNAI3 and GNAO1. Palmitoylated on Cys-2 and/or Cys-12. In terms of processing, phosphorylated. Phosphorylation at Tyr-168 by EGFR enhances GTPase accelerating (GAP) activity toward GNAI1.

Its subcellular location is the membrane. Functionally, regulates G protein-coupled receptor signaling cascades. Inhibits signal transduction by increasing the GTPase activity of G protein alpha subunits, thereby driving them into their inactive GDP-bound form. Plays an important role in the phototransduction cascade by regulating the lifetime and effective concentration of activated transducin alpha. May regulate extra and intracellular mitogenic signals. The polypeptide is Regulator of G-protein signaling 16 (RGS16) (Bos taurus (Bovine)).